We begin with the raw amino-acid sequence, 193 residues long: MASLVAGIDEVGRGCIAGPVIAAAVIFAPGQDTHGLADSKRLRPDRRLVLAGRICSESLAWAVGRAEVSEIDQLNILRATHLAMCRAVAALPVLPDWVRVDGNRYPPLDCPGEAIVGGDASVAEIAAASILAKVFRDREMEVLDRLCPGYALGVHKGYPTRLHIDRLASRGASFFHRRSFAPVRAVIDRSSAS.

In terms of domain architecture, RNase H type-2 spans serine 3–alanine 192. Residues aspartate 9, glutamate 10, and aspartate 101 each coordinate a divalent metal cation.

The protein belongs to the RNase HII family. The cofactor is Mn(2+). Mg(2+) serves as cofactor.

It localises to the cytoplasm. It catalyses the reaction Endonucleolytic cleavage to 5'-phosphomonoester.. In terms of biological role, endonuclease that specifically degrades the RNA of RNA-DNA hybrids. This is Ribonuclease HII from Methylococcus capsulatus (strain ATCC 33009 / NCIMB 11132 / Bath).